Reading from the N-terminus, the 209-residue chain is Uracil phosphoribosyltransferase (209 aa).

5-phospho-alpha-D-ribose 1-diphosphate-binding positions include Arg-79, Arg-104, and 131-139; that span reads DPMLATGNS. Uracil contacts are provided by residues Ile-194 and 199–201; that span reads GDA. Asp-200 contributes to the 5-phospho-alpha-D-ribose 1-diphosphate binding site.

The protein belongs to the UPRTase family. Requires Mg(2+) as cofactor.

It catalyses the reaction UMP + diphosphate = 5-phospho-alpha-D-ribose 1-diphosphate + uracil. It functions in the pathway pyrimidine metabolism; UMP biosynthesis via salvage pathway; UMP from uracil: step 1/1. Allosterically activated by GTP. Catalyzes the conversion of uracil and 5-phospho-alpha-D-ribose 1-diphosphate (PRPP) to UMP and diphosphate. This chain is Uracil phosphoribosyltransferase, found in Rhizobium rhizogenes (strain K84 / ATCC BAA-868) (Agrobacterium radiobacter).